The sequence spans 482 residues: tRNA sulfurtransferase (482 aa).

The region spanning 61–165 (AAIVAELTRI…DERLILVTAR (105 aa)) is the THUMP domain. Residues 183–184 (LI), Lys-265, Gly-287, and Gln-296 contribute to the ATP site. Cys-344 and Cys-456 are oxidised to a cystine. A Rhodanese domain is found at 404-482 (FSHNDVILDI…GFKNVKVYRP (79 aa)). Cys-456 acts as the Cysteine persulfide intermediate in catalysis.

This sequence belongs to the ThiI family.

It is found in the cytoplasm. It catalyses the reaction [ThiI sulfur-carrier protein]-S-sulfanyl-L-cysteine + a uridine in tRNA + 2 reduced [2Fe-2S]-[ferredoxin] + ATP + H(+) = [ThiI sulfur-carrier protein]-L-cysteine + a 4-thiouridine in tRNA + 2 oxidized [2Fe-2S]-[ferredoxin] + AMP + diphosphate. It carries out the reaction [ThiS sulfur-carrier protein]-C-terminal Gly-Gly-AMP + S-sulfanyl-L-cysteinyl-[cysteine desulfurase] + AH2 = [ThiS sulfur-carrier protein]-C-terminal-Gly-aminoethanethioate + L-cysteinyl-[cysteine desulfurase] + A + AMP + 2 H(+). Its pathway is cofactor biosynthesis; thiamine diphosphate biosynthesis. In terms of biological role, catalyzes the ATP-dependent transfer of a sulfur to tRNA to produce 4-thiouridine in position 8 of tRNAs, which functions as a near-UV photosensor. Also catalyzes the transfer of sulfur to the sulfur carrier protein ThiS, forming ThiS-thiocarboxylate. This is a step in the synthesis of thiazole, in the thiamine biosynthesis pathway. The sulfur is donated as persulfide by IscS. The polypeptide is tRNA sulfurtransferase (Erwinia tasmaniensis (strain DSM 17950 / CFBP 7177 / CIP 109463 / NCPPB 4357 / Et1/99)).